The chain runs to 997 residues: Malignant fibrous histiocytoma-amplified sequence 1 homolog (997 aa).

LRR repeat units lie at residues 32 to 53 (SLRQ…ADLG), 54 to 76 (DVEV…QSLS), 79 to 100 (NLHV…VYHL), 102 to 123 (RLTE…VGLL), 125 to 146 (KLKK…LGML), 148 to 170 (DLEE…QGLP), 171 to 192 (SLRT…LFHV), 194 to 216 (ALEE…IRSM), 218 to 239 (SLKI…ICEL), 241 to 262 (NLES…FGAL), 264 to 286 (KLKM…LQLV), 287 to 308 (DLEE…ISCM), 310 to 331 (KLVT…IVEL), and 333 to 354 (FLEE…FGKL). The region spanning 393–626 (QPAVKPRLKL…EKLLSVAEHR (234 aa)) is the Roc domain. The 225-residue stretch at 637–861 (PKSWQMLEEL…RFSVQINSHI (225 aa)) folds into the COR domain.

The protein localises to the cytoplasm. Probable GTP-binding protein. Functions in innate immunity and more specifically the inflammatory response as a regulator of the Toll-like receptor TLR2 and TLR4 signaling pathways. The chain is Malignant fibrous histiocytoma-amplified sequence 1 homolog (mfhas1) from Xenopus tropicalis (Western clawed frog).